We begin with the raw amino-acid sequence, 440 residues long: Serine hydroxymethyltransferase (440 aa).

(6S)-5,6,7,8-tetrahydrofolate is bound at residue 123-125; sequence GHI. Residue lysine 238 is modified to N6-(pyridoxal phosphate)lysine.

This sequence belongs to the SHMT family. As to quaternary structure, homodimer. Requires pyridoxal 5'-phosphate as cofactor.

The protein localises to the cytoplasm. It participates in amino-acid biosynthesis; glycine biosynthesis; glycine from L-serine: step 1/1. Catalyzes the reversible interconversion of serine and glycine with a modified folate serving as the one-carbon carrier. Also exhibits a pteridine-independent aldolase activity toward beta-hydroxyamino acids, producing glycine and aldehydes, via a retro-aldol mechanism. This Nitrosopumilus maritimus (strain SCM1) protein is Serine hydroxymethyltransferase.